Reading from the N-terminus, the 150-residue chain is SsrA-binding protein (150 aa).

This sequence belongs to the SmpB family.

It is found in the cytoplasm. In terms of biological role, required for rescue of stalled ribosomes mediated by trans-translation. Binds to transfer-messenger RNA (tmRNA), required for stable association of tmRNA with ribosomes. tmRNA and SmpB together mimic tRNA shape, replacing the anticodon stem-loop with SmpB. tmRNA is encoded by the ssrA gene; the 2 termini fold to resemble tRNA(Ala) and it encodes a 'tag peptide', a short internal open reading frame. During trans-translation Ala-aminoacylated tmRNA acts like a tRNA, entering the A-site of stalled ribosomes, displacing the stalled mRNA. The ribosome then switches to translate the ORF on the tmRNA; the nascent peptide is terminated with the 'tag peptide' encoded by the tmRNA and targeted for degradation. The ribosome is freed to recommence translation, which seems to be the essential function of trans-translation. This is SsrA-binding protein from Campylobacter jejuni subsp. jejuni serotype O:6 (strain 81116 / NCTC 11828).